The chain runs to 36 residues: Photosystem I reaction center subunit VIII (36 aa).

Residues 9-29 (ILVPLVGLVFPAITMVSLFLY) form a helical membrane-spanning segment.

It belongs to the PsaI family.

Its subcellular location is the plastid. It localises to the chloroplast thylakoid membrane. In terms of biological role, may help in the organization of the PsaL subunit. The chain is Photosystem I reaction center subunit VIII from Zygnema circumcarinatum (Green alga).